The primary structure comprises 648 residues: Serine/threonine-protein kinase PrkC (648 aa).

The Cytoplasmic portion of the chain corresponds to 1–330 (MLIGKRISGR…KKNGKRKKWP (330 aa)). In terms of domain architecture, Protein kinase spans 11–271 (YQILRVIGGG…DMEADIKTAF (261 aa)). ATP is bound by residues 17–25 (IGGGGMANV) and Lys40. Asp134 functions as the Proton acceptor in the catalytic mechanism. 4 positions are modified to phosphothreonine; by autocatalysis: Thr162, Thr163, Thr165, and Thr167. Phosphoserine; by autocatalysis is present on Ser214. Residues Thr290, Thr313, and Thr320 each carry the phosphothreonine; by autocatalysis modification. The helical transmembrane segment at 331 to 351 (WVLLTICLVFITAGILAVTVF) threads the bilayer. Residues 352 to 648 (PSLFMPKDVK…YKTIEYPKDE (297 aa)) lie on the Extracellular side of the membrane. 3 PASTA domains span residues 356 to 424 (MPKD…YKST), 425 to 492 (GKAK…TVSI), and 493 to 559 (GPED…TFSL).

This sequence belongs to the protein kinase superfamily. Ser/Thr protein kinase family. In terms of assembly, homodimer. Autophosphorylation on threonine residue(s) and serine residue considerably increases the kinase activity of the protein. Dephosphorylated in vitro by PrpC.

It localises to the spore membrane. The catalysed reaction is L-seryl-[protein] + ATP = O-phospho-L-seryl-[protein] + ADP + H(+). It carries out the reaction L-threonyl-[protein] + ATP = O-phospho-L-threonyl-[protein] + ADP + H(+). Bryostatin activates PrkC activity and induces germination, whereas staurosporine inhibits PrkC and significantly reduced peptidoglycan-dependent germination. Kinase activity of isolated N-terminus stimulated by poly-L-lysine or myelin basic protein. Protein kinase that is responsible for triggering spore germination in response to muropeptides, signaling bacteria to exit dormancy. PrkC is thus a germination receptor that binds peptidoglycan fragments containing m-Dpm (meso-diaminopimelate), which act as spore germinants. Autophosphorylates and phosphorylates EF-G (elongation factor G, fusA); the latter modification is likely necessary for germination in response to peptidoglycan. Another group did not detect phosphorylation of EF-G. PrkC is a substrate in vitro of the cotranscribed phosphatase PrpC, which suggests that they form a functional couple in vivo. Might also be involved in sporulation and biofilm formation. Does not seem to be involved in stress response. The protein is Serine/threonine-protein kinase PrkC (prkC) of Bacillus subtilis (strain 168).